The sequence spans 351 residues: Spindolin (351 aa).

The N-terminal stretch at 1–20 is a signal peptide; that stretch reads MNKFYYICIYINILYVCVSG.

In terms of assembly, homodimer; disulfide-linked.

This protein is a spindle body protein. The polypeptide is Spindolin (Lepidoptera (butterflies and moths)).